We begin with the raw amino-acid sequence, 153 residues long: Large ribosomal subunit protein uL22 (153 aa).

A disordered region spans residues 110-153 (ITVIVESRPPKQKGASAASARSRRAQGSKAAATKKSAETKEGSE). Basic and acidic residues predominate over residues 144–153 (KSAETKEGSE).

It belongs to the universal ribosomal protein uL22 family. As to quaternary structure, part of the 50S ribosomal subunit.

Its function is as follows. This protein binds specifically to 23S rRNA; its binding is stimulated by other ribosomal proteins, e.g. L4, L17, and L20. It is important during the early stages of 50S assembly. It makes multiple contacts with different domains of the 23S rRNA in the assembled 50S subunit and ribosome. Functionally, the globular domain of the protein is located near the polypeptide exit tunnel on the outside of the subunit, while an extended beta-hairpin is found that lines the wall of the exit tunnel in the center of the 70S ribosome. This Mycolicibacterium smegmatis (strain ATCC 700084 / mc(2)155) (Mycobacterium smegmatis) protein is Large ribosomal subunit protein uL22.